We begin with the raw amino-acid sequence, 202 residues long: Ribonuclease HII (202 aa).

An RNase H type-2 domain is found at 15–202; it reads QGVAGVDEAG…APIKAFGISA (188 aa). A divalent metal cation is bound by residues aspartate 21, glutamate 22, and aspartate 113.

This sequence belongs to the RNase HII family. It depends on Mn(2+) as a cofactor. The cofactor is Mg(2+).

The protein resides in the cytoplasm. It carries out the reaction Endonucleolytic cleavage to 5'-phosphomonoester.. Endonuclease that specifically degrades the RNA of RNA-DNA hybrids. The polypeptide is Ribonuclease HII (Bordetella avium (strain 197N)).